The sequence spans 276 residues: Pre-rRNA-processing protein PNO1 (276 aa).

Disordered regions lie at residues 1-39 and 51-92; these read MAAP…NDDE and TTVE…SKSN. 2 stretches are compositionally biased toward polar residues: residues 13-34 and 51-75; these read KSGI…ALDQ and TTVE…TTEL. Residues 197–249 form the KH domain; that stretch reads GDHLSRAIGRIAGKDGKTKFAIENATRTRIVLADSKIHILGGFTHIRMAREAV.

The protein belongs to the PNO1 family. Component of the small ribosomal subunit, ribosomal RNA processing complex (SSU RRP complex).

The protein resides in the cytoplasm. It is found in the nucleus. It localises to the nucleolus. In terms of biological role, required for small ribosomal subunit (SSU) synthesis. Has a role in the processing of early nucleolar and late cytoplasmic pre-RNA species. This is Pre-rRNA-processing protein PNO1 (PNO1) from Candida albicans (strain SC5314 / ATCC MYA-2876) (Yeast).